A 105-amino-acid polypeptide reads, in one-letter code: 5,5'-dehydrodivanillate O-demethylase ferredoxin subunit (105 aa).

Positions 2–105 constitute a 2Fe-2S ferredoxin-type domain; that stretch reads AQLKVVTRDG…GMTVTIAPED (104 aa). Cys40, Cys46, Cys49, and Cys86 together coordinate [2Fe-2S] cluster.

This sequence belongs to the adrenodoxin/putidaredoxin family. As to quaternary structure, monomer. The three-component monooxygenase is composed of an oxygenase (LigXa), a ferredoxin (LigXc) and a ferredoxin reductase (LigXd). [2Fe-2S] cluster is required as a cofactor.

The catalysed reaction is 5,5'-dehydrodivanillate + NADH + O2 + H(+) = 2,2',3-trihydroxy-3'-methoxy-5,5'-dicarboxybiphenyl + formaldehyde + NAD(+) + H2O. Involved in the catabolism of 5,5'-dehydrodivanillate (DDVA), an intermediate in the biodegradation of lignin. Part of a three-component monooxygenase that catalyzes the O-demethylation of DDVA, leading to the formation of 2,2',3-trihydroxy-3'-methoxy-5,5'-dicarboxybiphenyl (OH-DDVA). LigXc probably functions as an intermediate electron transfer protein between LigXd and LigXa. This Sphingobium sp. (strain NBRC 103272 / SYK-6) protein is 5,5'-dehydrodivanillate O-demethylase ferredoxin subunit.